Here is a 353-residue protein sequence, read N- to C-terminus: Photosystem II protein D1 (353 aa).

Position 2 is an N-acetylthreonine (Thr2). At Thr2 the chain carries Phosphothreonine. Helical transmembrane passes span 29-46, 118-133, and 142-156; these read YIGW…TATS, HFFI…EWEL, and WIAV…AATA. Position 118 (His118) interacts with chlorophyll a. Residue Tyr126 participates in pheophytin a binding. [CaMn4O5] cluster is bound by residues Asp170 and Glu189. Residues 197–218 traverse the membrane as a helical segment; sequence FHMLGVAGVFGGSLFSAMHGSL. His198 contributes to the chlorophyll a binding site. Residues His215 and 264 to 265 contribute to the a quinone site; that span reads SF. His215 contacts Fe cation. His272 lines the Fe cation pocket. The chain crosses the membrane as a helical span at residues 274–288; the sequence is FLAAWPVIGIWFTAL. 4 residues coordinate [CaMn4O5] cluster: His332, Glu333, Asp342, and Ala344. The propeptide occupies 345–353; it reads AFEAPSINA.

Belongs to the reaction center PufL/M/PsbA/D family. As to quaternary structure, PSII is composed of 1 copy each of membrane proteins PsbA, PsbB, PsbC, PsbD, PsbE, PsbF, PsbH, PsbI, PsbJ, PsbK, PsbL, PsbM, PsbT, PsbX, PsbY, PsbZ, Psb30/Ycf12, at least 3 peripheral proteins of the oxygen-evolving complex and a large number of cofactors. It forms dimeric complexes. Requires The D1/D2 heterodimer binds P680, chlorophylls that are the primary electron donor of PSII, and subsequent electron acceptors. It shares a non-heme iron and each subunit binds pheophytin, quinone, additional chlorophylls, carotenoids and lipids. D1 provides most of the ligands for the Mn4-Ca-O5 cluster of the oxygen-evolving complex (OEC). There is also a Cl(-1) ion associated with D1 and D2, which is required for oxygen evolution. The PSII complex binds additional chlorophylls, carotenoids and specific lipids. as cofactor. Tyr-161 forms a radical intermediate that is referred to as redox-active TyrZ, YZ or Y-Z. Post-translationally, C-terminally processed by CTPA; processing is essential to allow assembly of the oxygen-evolving complex and thus photosynthetic growth.

It localises to the plastid. Its subcellular location is the chloroplast thylakoid membrane. It carries out the reaction 2 a plastoquinone + 4 hnu + 2 H2O = 2 a plastoquinol + O2. In terms of biological role, photosystem II (PSII) is a light-driven water:plastoquinone oxidoreductase that uses light energy to abstract electrons from H(2)O, generating O(2) and a proton gradient subsequently used for ATP formation. It consists of a core antenna complex that captures photons, and an electron transfer chain that converts photonic excitation into a charge separation. The D1/D2 (PsbA/PsbD) reaction center heterodimer binds P680, the primary electron donor of PSII as well as several subsequent electron acceptors. This Chlamydomonas moewusii (Chlamydomonas eugametos) protein is Photosystem II protein D1.